A 193-amino-acid chain; its full sequence is Bcl-2-like protein 2 (193 aa).

Residue Ala2 is modified to N-acetylalanine. Positions 9-29 (DTRALVADFVGYKLRQKGYVC) match the BH4 motif. A BH1 motif is present at residues 85 to 104 (ELFQGGPNWGRLVAFFVFGA). A BH2 motif is present at residues 136–151 (DWIHSSGGWAEFTALY).

It belongs to the Bcl-2 family. In terms of assembly, interacts with HIF3A (via C-terminus domain). Interacts with BOP.

Its subcellular location is the mitochondrion membrane. In terms of biological role, promotes cell survival. Blocks dexamethasone-induced apoptosis. Mediates survival of postmitotic Sertoli cells by suppressing death-promoting activity of BAX. This is Bcl-2-like protein 2 (BCL2L2) from Bos taurus (Bovine).